Consider the following 1708-residue polypeptide: Clathrin heavy chain 1 (1708 aa).

The interval 1-492 (MAAANAPIAM…VDNDLALKIY (492 aa)) is globular terminal domain. WD40-like repeat regions lie at residues 25 to 67 (FVTF…RPIT), 68 to 113 (ADSA…MPEQ), 114 to 155 (VVFW…ANLA), 156 to 205 (NNQI…QALE), 206 to 270 (AHAA…PDFQ), 271 to 314 (DDFP…ISPD), and 315 to 343 (PIFL…ATVN). The tract at residues 462 to 478 (ENWLAEDKLECSEELGD) is binding site for the uncoating ATPase, involved in lattice disassembly. The segment at 493 to 536 (IKARATPKVVAAFAERREFDKILIYSKQVGYTPDYLFLLQTILR) is flexible linker. A distal segment region spans residues 537 to 648 (TDPQGAVNFA…RALQHYTELP (112 aa)). Positions 537–1708 (TDPQGAVNFA…AYGMPPMGSY (1172 aa)) are heavy chain arm. 7 CHCR repeats span residues 551–697 (QMEG…QIVV), 700–842 (AKEY…PEDF), 847–986 (ILSV…QLID), 993–1138 (LPES…VSEA), 1142–1283 (FIRA…FRLA), 1288–1434 (LNII…DLIN), and 1437–1580 (LNVL…KECF). Residues 653 to 1708 (VMVNTHAIEP…AYGMPPMGSY (1056 aa)) form a proximal segment region. Residues 1227–1536 (AAKIIYAFIS…YIYKKAGRWK (310 aa)) form an involved in binding clathrin light chain region. The segment at 1564 to 1708 (SEDLLVYFIE…AYGMPPMGSY (145 aa)) is trimerization.

It belongs to the clathrin heavy chain family. As to quaternary structure, clathrin triskelions, composed of 3 heavy chains and 3 light chains, are the basic subunits of the clathrin coat.

It is found in the cytoplasmic vesicle membrane. It localises to the membrane. The protein resides in the coated pit. Functionally, clathrin is the major protein of the polyhedral coat of coated pits and vesicles. The sequence is that of Clathrin heavy chain 1 from Oryza sativa subsp. japonica (Rice).